We begin with the raw amino-acid sequence, 427 residues long: Serine hydroxymethyltransferase (427 aa).

(6S)-5,6,7,8-tetrahydrofolate contacts are provided by residues L117 and 121 to 123 (GHL). N6-(pyridoxal phosphate)lysine is present on K226.

It belongs to the SHMT family. Homodimer. The cofactor is pyridoxal 5'-phosphate.

It localises to the cytoplasm. The catalysed reaction is (6R)-5,10-methylene-5,6,7,8-tetrahydrofolate + glycine + H2O = (6S)-5,6,7,8-tetrahydrofolate + L-serine. The enzyme catalyses L-threonine = acetaldehyde + glycine. It carries out the reaction L-allo-threonine = acetaldehyde + glycine. Its pathway is one-carbon metabolism; tetrahydrofolate interconversion. It functions in the pathway amino-acid biosynthesis; glycine biosynthesis; glycine from L-serine: step 1/1. Its primary function is to catalyze the reversible interconversion of serine and glycine with tetrahydrofolate (THF) serving as the one-carbon carrier. This reaction serves as the major source of one-carbon groups required for the biosynthesis of purines, thymidylate, methionine, and other important biomolecules. Also exhibits THF-independent aldolase activity toward beta-hydroxyamino acids, producing glycine and aldehydes, via a retro-aldol mechanism. Thus, is able to catalyze the cleavage of L-threonine, L-allo-threonine, L-threo-beta-phenylserine and L-erythro-beta-phenylserine. This second activity is likely to be physiological in H.thermophilus, which is an organism that lacks the ortholog gene for the 'real' threonine aldolase characterized in mesophilic bacteria (LtaE), yeast and plants. The protein is Serine hydroxymethyltransferase of Hydrogenobacter thermophilus (strain DSM 6534 / IAM 12695 / TK-6).